Here is a 495-residue protein sequence, read N- to C-terminus: Membrane-bound lytic murein transglycosylase F (495 aa).

Residues 1–30 form the signal peptide; it reads MSRIRHHRFIQSCLVISTLLITLTGCQVES. Residues 31–270 are non-LT domain; that stretch reads EPKTKLEQIR…LLEEKYFGHV (240 aa). The interval 272–495 is LT domain; it reads SFDYVDTRAF…SVSQAIETKK (224 aa). E315 is a catalytic residue.

The protein in the N-terminal section; belongs to the bacterial solute-binding protein 3 family. In the C-terminal section; belongs to the transglycosylase Slt family.

It is found in the cell outer membrane. It carries out the reaction Exolytic cleavage of the (1-&gt;4)-beta-glycosidic linkage between N-acetylmuramic acid (MurNAc) and N-acetylglucosamine (GlcNAc) residues in peptidoglycan, from either the reducing or the non-reducing ends of the peptidoglycan chains, with concomitant formation of a 1,6-anhydrobond in the MurNAc residue.. Its function is as follows. Murein-degrading enzyme that degrades murein glycan strands and insoluble, high-molecular weight murein sacculi, with the concomitant formation of a 1,6-anhydromuramoyl product. Lytic transglycosylases (LTs) play an integral role in the metabolism of the peptidoglycan (PG) sacculus. Their lytic action creates space within the PG sacculus to allow for its expansion as well as for the insertion of various structures such as secretion systems and flagella. The polypeptide is Membrane-bound lytic murein transglycosylase F (Aliivibrio fischeri (strain ATCC 700601 / ES114) (Vibrio fischeri)).